The primary structure comprises 462 residues: Putative F-box protein At1g12855 (462 aa).

Residues 1–22 are compositionally biased toward basic and acidic residues; it reads MESREDSFISKEKKSTMKKEKQ. A disordered region spans residues 1–59; the sequence is MESREDSFISKEKKSTMKKEKQAIASQRNRRRVIKNRGNGKRLIASLSQRKRRRIPRGR. Residues 28 to 40 show a composition bias toward basic residues; it reads RNRRRVIKNRGNG. Positions 65–110 constitute an F-box domain; that stretch reads VFAPSSLPNDVVEEIFLRLPVKAIIQLKSLSKQWRSTIESRSFEER.

This is Putative F-box protein At1g12855 from Arabidopsis thaliana (Mouse-ear cress).